The primary structure comprises 563 residues: E3 ubiquitin-protein ligase IpaH2.5 (563 aa).

The segment at 1–270 (MIKSTNIQVI…PDYSGPQIFF (270 aa)) is interaction with target proteins. LRR repeat units lie at residues 69–90 (LQNQEAELNLSELDLKTLPDLP), 91–115 (PQITTLEIRKNLLTHLPDLPPMLKV), 117–130 (HAQFNQLESLPALP), 131–150 (ETLEELNAGDNKIKELPFLP), 151–170 (ENLTHLRVHNNRLHILPLLP), 171–195 (PELKLLVVSGNRLDSIPPFPDKLEG), 197–209 (ALANNFIEQLPEL), and 210–233 (PFSMNRAVLMNNNLTTLPESVLRL). Residues 271–281 (SMGNSATISAP) form a linker region. The interval 282–563 (EHSLADAVTA…YRQLTDEVLA (282 aa)) is E3 ubiquitin-protein ligase catalytic domain. The 280-residue stretch at 284-563 (SLADAVTAWF…YRQLTDEVLA (280 aa)) folds into the NEL domain. Residue C368 is the Glycyl thioester intermediate of the active site.

This sequence belongs to the LRR-containing bacterial E3 ligase family. In terms of assembly, interacts with human RBCK1/HOIL-1 and RNF31/HOIP components of the LUBAC complex. Post-translationally, ubiquitinated in the presence of host E1 ubiquitin-activating enzyme, E2 ubiquitin-conjugating enzyme and ubiquitin.

The protein localises to the secreted. Its subcellular location is the host cytoplasm. The enzyme catalyses S-ubiquitinyl-[E2 ubiquitin-conjugating enzyme]-L-cysteine + [acceptor protein]-L-lysine = [E2 ubiquitin-conjugating enzyme]-L-cysteine + N(6)-ubiquitinyl-[acceptor protein]-L-lysine.. Its pathway is protein modification; protein ubiquitination. With respect to regulation, exists in an autoinhibited state in the absence of substrate protein, probably due to interactions of the leucine-rich repeat domain with the catalytic domain. Is activated upon binding to a substrate protein. Its function is as follows. E3 ubiquitin-protein ligase effector that inhibits host cell innate immunity during bacterial infection by catalyzing 'Lys-48'-linked polyubiquitination and subsequent degradation of host RNF31/HOIP. Host RNF31/HOIP is the catalytic component of the LUBAC complex, which conjugates linear ('Met-1'-linked) polyubiquitin chains at the surface of bacteria invading the host cytosol to form the ubiquitin coat surrounding bacteria. The bacterial ubiquitin coat acts as an 'eat-me' signal for xenophagy and promotes NF-kappa-B activation. The protein is E3 ubiquitin-protein ligase IpaH2.5 of Shigella flexneri.